The chain runs to 314 residues: Adenosine receptor A3 (314 aa).

The Extracellular portion of the chain corresponds to 1-14 (MAVNGTALLLANVT). Asn4 and Asn12 each carry an N-linked (GlcNAc...) asparagine glycan. The chain crosses the membrane as a helical span at residues 15–37 (YITVEILIGLCAIVGNVLVIWVV). Residues 38-48 (KLNPSLQTTTF) are Cytoplasmic-facing. The chain crosses the membrane as a helical span at residues 49–72 (YFIVSLALADIAVGVLVMPLAIVI). Topologically, residues 73–84 (SLGITIQFYNCL) are extracellular. The cysteines at positions 83 and 166 are disulfide-linked. Residues 85-106 (FMTCLLLIFTHASIMSLLAIAV) traverse the membrane as a helical segment. Topologically, residues 107–126 (DRYLRVKLTVRYRRVTTQRR) are cytoplasmic. A helical membrane pass occupies residues 127–148 (IWLALGLCWLVSFLVGLTPMFG). The Extracellular segment spans residues 149–177 (WNMKLTSEHQRNVTFLSCQFSSVMRMDYM). Asn160 carries N-linked (GlcNAc...) asparagine glycosylation. The helical transmembrane segment at 178–198 (VYFSFFTWILIPLVVMCAIYL) threads the bilayer. The Cytoplasmic portion of the chain corresponds to 199–231 (DIFYVIRNKLNQNFSSSKETGAFYGREFKTAKS). A helical membrane pass occupies residues 232–255 (LFLVLFLFAFSWLPLSIINCITYF). The Extracellular portion of the chain corresponds to 256-261 (HGEVPQ). A helical membrane pass occupies residues 262 to 284 (IILYLGILLSHANSMMNPIVYAY). Residues 285–314 (KIKKFKETYLLIFKTYMICQSSDSLDSSTE) are Cytoplasmic-facing. Cys303 carries the S-palmitoyl cysteine lipid modification.

It belongs to the G-protein coupled receptor 1 family.

It localises to the cell membrane. Functionally, receptor for adenosine. The activity of this receptor is mediated by G proteins which inhibits adenylyl cyclase. The protein is Adenosine receptor A3 (ADORA3) of Canis lupus familiaris (Dog).